Reading from the N-terminus, the 564-residue chain is uncharacterized protein (564 aa).

8 helical membrane-spanning segments follow: residues 12 to 32 (TYYLWIALFLLLLYVSPLFIL), 97 to 119 (MTAYAISQTVTRVVAFFGMYVLL), 139 to 161 (AFALTPFWPSGMLSTLGYPLALW), 188 to 208 (FVLGFFFFLAGMACFWLYDAI), 213 to 233 (WNLMFLGSIAFMTSIYLFVEY), 277 to 297 (MTVHTVVILPILMVVFAALLF), 306 to 326 (NVYLFLCVLNYGLSLWYAFWF), and 348 to 368 (FHFLRPLVIYVSFALALYLIW).

The protein localises to the cell membrane. This is an uncharacterized protein from Bacillus subtilis (strain 168).